The sequence spans 361 residues: DNA replication and repair protein RecF (361 aa).

30 to 37 lines the ATP pocket; it reads GANGSGKT.

The protein belongs to the RecF family.

It is found in the cytoplasm. Its function is as follows. The RecF protein is involved in DNA metabolism; it is required for DNA replication and normal SOS inducibility. RecF binds preferentially to single-stranded, linear DNA. It also seems to bind ATP. This Pectobacterium atrosepticum (strain SCRI 1043 / ATCC BAA-672) (Erwinia carotovora subsp. atroseptica) protein is DNA replication and repair protein RecF.